We begin with the raw amino-acid sequence, 215 residues long: Probable phosphoglycerate mutase GpmB (215 aa).

Substrate contacts are provided by residues Arg-8–Asn-15, Gln-21–Gly-22, Arg-58, Lys-60, Glu-82–Met-85, Arg-104–Arg-105, and Gly-151–Ile-152. Catalysis depends on His-9, which acts as the Tele-phosphohistidine intermediate. Residue Glu-82 is the Proton donor/acceptor of the active site.

It belongs to the phosphoglycerate mutase family. GpmB subfamily.

It catalyses the reaction (2R)-2-phosphoglycerate = (2R)-3-phosphoglycerate. It participates in carbohydrate degradation; glycolysis; pyruvate from D-glyceraldehyde 3-phosphate: step 3/5. The chain is Probable phosphoglycerate mutase GpmB from Salmonella typhi.